The chain runs to 180 residues: Protein SPO16 homolog (180 aa).

As to quaternary structure, homooligomer. Interacts with SHOC, SYCP1 and SYCE3.

The protein resides in the chromosome. Plays a key role in reinforcing the integrity of the central element of the synaptonemal complex (SC) thereby stabilizing SC, ensuring progression of meiotic prophase I in male and female germ cells. Promotes homologous recombination and crossing-over in meiotic prophase I via its association with SHOC1. Required for the localization of TEX11 and MSH4 to recombination intermediates. This is Protein SPO16 homolog from Homo sapiens (Human).